We begin with the raw amino-acid sequence, 402 residues long: Zinc finger protein 322 (402 aa).

The C2H2-type 1; atypical zinc-finger motif lies at 43–65 (YQCLECKQNFCENLALIMCERTH). 8 C2H2-type zinc fingers span residues 71-93 (YKCD…QRIH), 99-121 (YKCS…QRTH), 127-149 (YTCD…QRSH), 155-177 (YLCS…RRTH), 183-205 (FKCL…QRTH), 211-233 (YKCN…KRVH), 239-261 (YKCG…QRVH), and 267-289 (YKCL…QATH). The C2H2-type 10; degenerate zinc finger occupies 293–315 (FKCLEYEKSFNCSSDLIVHQRIH). Residues 351-373 (YKYTVCDKSFHQSSALLQHQTVH) form a C2H2-type 11; degenerate zinc finger. S391 carries the phosphoserine modification.

Belongs to the krueppel C2H2-type zinc-finger protein family. In terms of assembly, interacts with POU5F1. As to expression, ubiquitous. Highly expressed in heart and skeletal muscle.

The protein localises to the cytoplasm. The protein resides in the nucleus. Transcriptional activator. Important for maintenance of pluripotency in embryonic stem cells. Binds directly to the POU5F1 distal enhancer and the NANOG proximal promoter, and enhances expression of both genes. Can also bind to numerous other gene promoters and regulates expression of many other pluripotency factors, either directly or indirectly. Promotes inhibition of MAPK signaling during embryonic stem cell differentiation. This is Zinc finger protein 322 (ZNF322) from Homo sapiens (Human).